Here is a 229-residue protein sequence, read N- to C-terminus: Multiple organellar RNA editing factor 5, chloroplastic/mitochondrial (229 aa).

The N-terminal 57 residues, 1–57 (MAKTLARSTASRITKRLISTSGATTPSPSYILSRRSTPVFSHAVGFISSLNRFTTIR), are a transit peptide targeting the chloroplast and mitochondrion.

This sequence belongs to the MORF family. Homodimer and heterodimers with MORF8/RIP1, MORF3/RIP3, MORF6/RIP6, MORF7/RIP7 and MORF9/RIP9.

The protein resides in the mitochondrion. Its subcellular location is the plastid. It is found in the chloroplast. Involved in organellar RNA editing. Required for the processing of few RNA editing sites in mitochondria. In Arabidopsis thaliana (Mouse-ear cress), this protein is Multiple organellar RNA editing factor 5, chloroplastic/mitochondrial.